Reading from the N-terminus, the 191-residue chain is Cell number regulator 1 (191 aa).

The segment at 13 to 44 is disordered; sequence FSAGAPPTAPPPPAAYHQQQQQHGANMDTSRP. Positions 27–37 are enriched in low complexity; the sequence is AYHQQQQQHGA. A helical transmembrane segment spans residues 91-113; it reads IASGLVYGLICASTGMGCLYSCL.

The protein belongs to the cornifelin family. As to expression, expressed in roots, coleoptiles, stalks and silks. Detected in leaves, apical meristems, immature ears and pericarps. Highest expression in coleoptiles and silks.

It localises to the membrane. Its function is as follows. Acts as a negative regulator of cell number. This Zea mays (Maize) protein is Cell number regulator 1 (CNR1).